The primary structure comprises 394 residues: Multidrug resistance protein D (394 aa).

The Cytoplasmic portion of the chain corresponds to 1–8 (MKRQRNVN). Residues 9–29 (LLLMLVLLVAVGQMAQTIYIP) traverse the membrane as a helical segment. The Periplasmic segment spans residues 30–46 (AIADMARDLNVREGAVQ). A helical transmembrane segment spans residues 47–67 (SVMGAYLLTYGVSQLFYGPIS). At 68–73 (DRVGRR) the chain is on the cytoplasmic side. The chain crosses the membrane as a helical span at residues 74–94 (PVILVGMSIFMLATLVAVTTS). Residue Ser-95 is a topological domain, periplasmic. A helical transmembrane segment spans residues 96–116 (LTVLIAASAMQGMGTGVGGVM). The Cytoplasmic segment spans residues 117–134 (ARTLPRDLYERTQLRHAN). Residues 135-155 (SLLNMGILVSPLLAPLIGGLL) traverse the membrane as a helical segment. Over 156 to 162 (DTMWNWR) the chain is Periplasmic. Residues 163–183 (ACYLFLLVLCAGVTFSMARWM) form a helical membrane-spanning segment. Topologically, residues 184-212 (PETRPVDAPRTRLLTSYKTLFGNSGFNCY) are cytoplasmic. Residues 213 to 233 (LLMLIGGLAGIAAFEACSGVL) traverse the membrane as a helical segment. At 234-242 (MGAVLGLSS) the chain is on the periplasmic side. Residues 243 to 263 (MTVSILFILPIPAAFFGAWFA) traverse the membrane as a helical segment. Residues 264-276 (GRPNKRFSTLMWQ) lie on the Cytoplasmic side of the membrane. A helical transmembrane segment spans residues 277-297 (SVICCLLAGLLMWIPDWFGVM). A topological domain (periplasmic) is located at residue Asn-298. A helical membrane pass occupies residues 299-319 (VWTLLVPAALFFFGAGMLFPL). Residues 320–329 (ATSGAMEPFP) are Cytoplasmic-facing. Residues 330 to 350 (FLAGTAGALVGGLQNIGSGVL) form a helical membrane-spanning segment. Residues 351 to 364 (ASLSAMLPQTGQGS) lie on the Periplasmic side of the membrane. A helical transmembrane segment spans residues 365 to 385 (LGLLMTLMGLLIVLCWLPLAT). Residues 386–394 (RMSHQGQPV) are Cytoplasmic-facing.

The protein belongs to the major facilitator superfamily.

Its subcellular location is the cell inner membrane. In terms of biological role, multidrug resistance pump that participates in a low energy shock adaptive response. The protein is Multidrug resistance protein D (emrD) of Escherichia coli (strain K12).